We begin with the raw amino-acid sequence, 104 residues long: Large ribosomal subunit protein eL42 (104 aa).

A disordered region spans residues 22-56 (KVSQAKKSKDNPRAQGNRRYARKQRGYGGQTKPIL).

It belongs to the eukaryotic ribosomal protein eL42 family.

This is Large ribosomal subunit protein eL42 (RPL44) from Encephalitozoon cuniculi (strain GB-M1) (Microsporidian parasite).